The primary structure comprises 195 residues: Nicotinamide riboside kinase 2 (195 aa).

An ATP-binding site is contributed by G9–T17. Positions 16 and 35 each coordinate Mg(2+). D35 (proton acceptor) is an active-site residue. Substrate-binding positions include D35–F38 and W54–D55. An ATP-binding site is contributed by R130. Residues R131 and Y136 to M137 each bind substrate. ATP contacts are provided by residues R134 to Y136 and K174 to P176.

The protein belongs to the uridine kinase family. NRK subfamily. As to quaternary structure, monomer. Interacts with ITGB1 alone or when associated with alpha-7, but not with alpha-5. As to expression, expressed in skeletal muscle (at protein level).

The enzyme catalyses beta-nicotinamide D-riboside + ATP = beta-nicotinamide D-ribonucleotide + ADP + H(+). It catalyses the reaction beta-D-ribosylnicotinate + ATP = nicotinate beta-D-ribonucleotide + ADP + H(+). Its pathway is cofactor biosynthesis; NAD(+) biosynthesis. Catalyzes the phosphorylation of nicotinamide riboside (NR) and nicotinic acid riboside (NaR) to form nicotinamide mononucleotide (NMN) and nicotinic acid mononucleotide (NaMN). Reduces laminin matrix deposition and cell adhesion to laminin, but not to fibronectin. Involved in the regulation of PXN at the protein level and of PXN tyrosine phosphorylation. May play a role in the regulation of terminal myogenesis. The polypeptide is Nicotinamide riboside kinase 2 (Nmrk2) (Mus musculus (Mouse)).